Reading from the N-terminus, the 362-residue chain is Protein Tob1 (362 aa).

The Bipartite nuclear localization signal motif lies at 22–39 (RRRVNIFGEELERLLKKK). Residues 82–92 (VRGNLPQDLSV) form an important for nuclear localization region. Residues 144–160 (DPASSVSSSPSPPFGHS) show a composition bias toward low complexity. The disordered stretch occupies residues 144–171 (DPASSVSSSPSPPFGHSAAVSPTFMPRS). The tract at residues 161 to 220 (AAVSPTFMPRSTQPLTFTTATFAATKFGSTKMKNSGRSSKVARTSPINLGLTVNVNDLLK) is required for interaction with CPEB3. Thr-204 carries the phosphothreonine modification. The short motif at 228–236 (VHSLYGLGL) is the Nuclear export signal element. The tract at residues 234–284 (LGLGSQQQPQPQPQQQQQQQPSSSQPPPPLPQQQQQQPQQQQQQQQQTSAL) is disordered. Low complexity-rich tracts occupy residues 238–256 (SQQQPQPQPQQQQQQQPSS) and 265–280 (QQQQQQPQQQQQQQQQ).

This sequence belongs to the BTG family. In terms of assembly, interacts with ERBB2. Interacts with CNOT7. Interacts with CPEB3 (via C-terminal RNA-binding region); recruits CNOT7 to CPEB3 to form a ternary complex required for mRNA deadenylation and decay. Interacts with CNOT8. Interacts with CPEB4. Post-translationally, phosphorylated on Ser and Thr residues. Ubiquitous.

The protein resides in the cytoplasm. Its subcellular location is the nucleus. Functionally, anti-proliferative protein; the function is mediated by association with deadenylase subunits of the CCR4-NOT complex. Mediates CPEB3-accelerated mRNA deadenylation by binding to CPEB3 and recruiting CNOT7 which leads to target mRNA deadenylation and decay. This Mus musculus (Mouse) protein is Protein Tob1 (Tob1).